The following is a 286-amino-acid chain: uncharacterized protein (286 aa).

Belongs to the methyltransferase superfamily.

Functionally, involved in osmoadaptation. This is an uncharacterized protein from Emericella nidulans (strain FGSC A4 / ATCC 38163 / CBS 112.46 / NRRL 194 / M139) (Aspergillus nidulans).